Here is a 161-residue protein sequence, read N- to C-terminus: Putative pre-16S rRNA nuclease (161 aa).

This sequence belongs to the YqgF nuclease family.

It is found in the cytoplasm. Functionally, could be a nuclease involved in processing of the 5'-end of pre-16S rRNA. This Bradyrhizobium sp. (strain BTAi1 / ATCC BAA-1182) protein is Putative pre-16S rRNA nuclease.